Here is a 305-residue protein sequence, read N- to C-terminus: DNA-directed RNA polymerase 35 kDa subunit (305 aa).

The protein belongs to the poxviridae DNA-directed RNA polymerase 35 kDa subunit family. In terms of assembly, the DNA-dependent RNA polymerase used for intermediate and late genes expression consists of eight subunits 147 kDa, 133 kDa, 35 kDa, 30 kDa, 22 kDa, 19 kDa, 18 kDa and 7 kDa totalling more than 500 kDa in mass. The same holoenzyme, with the addition of the transcription-specificity factor RAP94, is used for early gene expression.

Its subcellular location is the virion. The enzyme catalyses RNA(n) + a ribonucleoside 5'-triphosphate = RNA(n+1) + diphosphate. Its function is as follows. Part of the DNA-dependent RNA polymerase which catalyzes the transcription of viral DNA into RNA using the four ribonucleoside triphosphates as substrates. Responsible for the transcription of early, intermediate and late genes. DNA-dependent RNA polymerase associates with the early transcription factor (ETF), itself composed of D6 and A7, thereby allowing the early genes transcription. Late transcription, and probably also intermediate transcription, require newly synthesized RNA polymerase. This chain is DNA-directed RNA polymerase 35 kDa subunit (OPG156), found in Bos taurus (Bovine).